Consider the following 561-residue polypeptide: Zinc finger protein 37A (561 aa).

Residues 8–79 (VSFRDVTVGF…EEKFPSQSHL (72 aa)) enclose the KRAB domain. A C2H2-type 1; degenerate zinc finger spans residues 146–168 (FEYNECGKAFPENSLFLVHKRGY). The segment at 243-265 (IEYNECGTFFSEKLVLHLQQRTH) adopts a C2H2-type 2; degenerate zinc-finger fold. 10 C2H2-type zinc fingers span residues 271-293 (YECH…QRTH), 299-321 (YECH…QRIH), 327-349 (YGCH…QRTH), 355-377 (YECH…QKTH), 383-405 (YECY…QRIH), 411-433 (YECN…LRTH), 439-461 (YECI…LRRH), 467-489 (FGCN…QRTH), 495-517 (YGCN…HRTH), and 523-545 (YECN…QRIH).

The protein belongs to the krueppel C2H2-type zinc-finger protein family.

The protein resides in the nucleus. May be involved in transcriptional regulation. The chain is Zinc finger protein 37A (ZNF37A) from Homo sapiens (Human).